A 341-amino-acid polypeptide reads, in one-letter code: UDP-3-O-acylglucosamine N-acyltransferase (341 aa).

The Proton acceptor role is filled by His-241.

The protein belongs to the transferase hexapeptide repeat family. LpxD subfamily. In terms of assembly, homotrimer.

It carries out the reaction a UDP-3-O-[(3R)-3-hydroxyacyl]-alpha-D-glucosamine + a (3R)-hydroxyacyl-[ACP] = a UDP-2-N,3-O-bis[(3R)-3-hydroxyacyl]-alpha-D-glucosamine + holo-[ACP] + H(+). Its pathway is bacterial outer membrane biogenesis; LPS lipid A biosynthesis. Its function is as follows. Catalyzes the N-acylation of UDP-3-O-acylglucosamine using 3-hydroxyacyl-ACP as the acyl donor. Is involved in the biosynthesis of lipid A, a phosphorylated glycolipid that anchors the lipopolysaccharide to the outer membrane of the cell. The sequence is that of UDP-3-O-acylglucosamine N-acyltransferase from Saccharophagus degradans (strain 2-40 / ATCC 43961 / DSM 17024).